A 144-amino-acid polypeptide reads, in one-letter code: Large-conductance mechanosensitive channel (144 aa).

Helical transmembrane passes span 21–41 (VGII…ANVI) and 76–96 (GIFL…FCII). The segment at 105–144 (QRGGKTRRAVQTECGRDAAYRDPRSLETTKQRHGAGYNDD) is disordered. Basic and acidic residues predominate over residues 118 to 134 (CGRDAAYRDPRSLETTK).

It belongs to the MscL family. As to quaternary structure, homopentamer.

The protein resides in the cell inner membrane. In terms of biological role, channel that opens in response to stretch forces in the membrane lipid bilayer. May participate in the regulation of osmotic pressure changes within the cell. The sequence is that of Large-conductance mechanosensitive channel from Sodalis glossinidius (strain morsitans).